The primary structure comprises 247 residues: tRNA pseudouridine synthase A (247 aa).

Aspartate 52 functions as the Nucleophile in the catalytic mechanism. Tyrosine 113 contributes to the substrate binding site.

Belongs to the tRNA pseudouridine synthase TruA family. Homodimer.

The catalysed reaction is uridine(38/39/40) in tRNA = pseudouridine(38/39/40) in tRNA. Functionally, formation of pseudouridine at positions 38, 39 and 40 in the anticodon stem and loop of transfer RNAs. The polypeptide is tRNA pseudouridine synthase A (Sinorhizobium medicae (strain WSM419) (Ensifer medicae)).